Reading from the N-terminus, the 357-residue chain is Acyl-coenzyme A diphosphatase NUDT19 (357 aa).

Residues 10–242 form the Nudix hydrolase domain; that stretch reads AATVMLAAGW…IWLAPPQFYE (233 aa). A disordered region spans residues 72–94; it reads PRFGLGPEPPRQPPFPGLSHGDA. A compositionally biased stretch (pro residues) spans 78-87; the sequence is PEPPRQPPFP. Positions 97–118 match the Nudix box motif; sequence AALPDDVALRICAIRETFEEAG. 2 residues coordinate Mg(2+): Glu-112 and Glu-116. N6-succinyllysine is present on Lys-300. A Microbody targeting signal motif is present at residues 355–357; sequence AHL.

It belongs to the Nudix hydrolase family. As to quaternary structure, monomer. Mg(2+) serves as cofactor. Requires Mn(2+) as cofactor.

Its subcellular location is the peroxisome. The catalysed reaction is an acyl-CoA + H2O = an acyl-4'-phosphopantetheine + adenosine 3',5'-bisphosphate + 2 H(+). The enzyme catalyses CoA + H2O = (R)-4'-phosphopantetheine + adenosine 3',5'-bisphosphate + 2 H(+). It catalyses the reaction hexanoyl-CoA + H2O = hexanoyl-4'-phosphopantetheine + adenosine 3',5'-bisphosphate + 2 H(+). It carries out the reaction octanoyl-CoA + H2O = S-octanoyl-4'-phosphopantetheine + adenosine 3',5'-bisphosphate + 2 H(+). The catalysed reaction is butanoyl-CoA + H2O = S-butanoyl-4'-phosphopantetheine + adenosine 3',5'-bisphosphate + 2 H(+). The enzyme catalyses propanoyl-CoA + H2O = propanoyl-4'-phosphopantetheine + adenosine 3',5'-bisphosphate + 2 H(+). It catalyses the reaction malonyl-CoA + H2O = malonyl-4'-phosphopantetheine + adenosine 3',5'-bisphosphate + 2 H(+). It carries out the reaction succinyl-CoA + H2O = succinyl-4'-phosphopantetheine + adenosine 3',5'-bisphosphate + 2 H(+). The catalysed reaction is choloyl-CoA + H2O = S-choloyl-4'-phosphopantetheine + adenosine 3',5'-bisphosphate + 2 H(+). The enzyme catalyses 4,8-dimethylnonanoyl-CoA + H2O = S-(4,8-dimethylnonanoyl)-4'-phosphopantetheine + adenosine 3',5'-bisphosphate + 2 H(+). It catalyses the reaction (9Z,12Z,15Z)-octadecatrienoyl-CoA + H2O = S-(9Z,12Z,15Z-octadecatrienoyl)-4'-phosphopantetheine + adenosine 3',5'-bisphosphate + 2 H(+). It carries out the reaction (9Z,12Z)-octadecadienoyl-CoA + H2O = S-(9Z,12Z-octadecadienoyl)-4'-phosphopantetheine + adenosine 3',5'-bisphosphate + 2 H(+). The catalysed reaction is (9Z)-hexadecenoyl-CoA + H2O = S-(9Z-hexadecenoyl)-4'-phosphopantetheine + adenosine 3',5'-bisphosphate + 2 H(+). The enzyme catalyses (9Z)-tetradecenoyl-CoA + H2O = S-(9Z-tetradecenoyl)-4'-phosphopantetheine + adenosine 3',5'-bisphosphate + 2 H(+). It catalyses the reaction (6Z)-octenoyl-CoA + H2O = S-(6Z-octenoyl)-4'-phosphopantetheine + adenosine 3',5'-bisphosphate + 2 H(+). It carries out the reaction hexadecanoyl-CoA + H2O = S-hexadecanoyl-4'-phosphopantetheine + adenosine 3',5'-bisphosphate + 2 H(+). The catalysed reaction is tetradecanoyl-CoA + H2O = tetradecanoyl-4'-phosphopantetheine + adenosine 3',5'-bisphosphate + 2 H(+). The enzyme catalyses dodecanoyl-CoA + H2O = S-dodecanoyl-4'-phosphopantetheine + adenosine 3',5'-bisphosphate + 2 H(+). It catalyses the reaction a 5'-end CoA-ribonucleoside in mRNA + H2O = a 5'-end phospho-adenosine-phospho-ribonucleoside in mRNA + (R)-4'-phosphopantetheine + 2 H(+). In terms of biological role, fatty acyl-coenzyme A (CoA) diphosphatase that hydrolyzes fatty acyl-CoA to yield acyl-4'-phosphopantetheine and adenosine 3',5'-bisphosphate. Mediates the hydrolysis of a wide range of CoA esters, including choloyl-CoA and branched-chain fatty-acyl-CoA esters and at low substrate concentrations medium and long-chain fatty-acyl-CoA esters are the primary substrates. Highest activity seen with medium-chain acyl-CoA esters and higher rates of activity seen with the unsaturated acyl-CoA esters compared with the saturated esters. Exhibits decapping activity towards dpCoA-capped RNAs in vitro. This Mus caroli (Ryukyu mouse) protein is Acyl-coenzyme A diphosphatase NUDT19 (Nudt19).